A 529-amino-acid polypeptide reads, in one-letter code: Bifunctional purine biosynthesis protein PurH (529 aa).

The MGS-like domain occupies 1-148 (MNNARPIRRA…KNHKDVVIVV (148 aa)).

The protein belongs to the PurH family.

It carries out the reaction (6R)-10-formyltetrahydrofolate + 5-amino-1-(5-phospho-beta-D-ribosyl)imidazole-4-carboxamide = 5-formamido-1-(5-phospho-D-ribosyl)imidazole-4-carboxamide + (6S)-5,6,7,8-tetrahydrofolate. The catalysed reaction is IMP + H2O = 5-formamido-1-(5-phospho-D-ribosyl)imidazole-4-carboxamide. It functions in the pathway purine metabolism; IMP biosynthesis via de novo pathway; 5-formamido-1-(5-phospho-D-ribosyl)imidazole-4-carboxamide from 5-amino-1-(5-phospho-D-ribosyl)imidazole-4-carboxamide (10-formyl THF route): step 1/1. It participates in purine metabolism; IMP biosynthesis via de novo pathway; IMP from 5-formamido-1-(5-phospho-D-ribosyl)imidazole-4-carboxamide: step 1/1. This Shewanella amazonensis (strain ATCC BAA-1098 / SB2B) protein is Bifunctional purine biosynthesis protein PurH.